A 215-amino-acid polypeptide reads, in one-letter code: MSKVYDWFEERLEIQAIADDITSKYVPPHVNIFYCLGGITLTCFLVQVATGFAMTFYYRPTVTDAFASVQYIMTEANFGWLIRSVHRWSASMMVLMMILHVFRVYLTGGFKKPRELTWVTGVVLAVLTASFGVTGYSLPRDQIGYWAVKIVTGVPEAIPVIGSPLVELLRGSASVGQSTLTRFYSLHTFVLPLLTAVFMLMHFPMIRKQGISGPL.

The helical transmembrane segment at 32-52 threads the bilayer; sequence IFYCLGGITLTCFLVQVATGF. Position 35 (cysteine 35) interacts with heme c. 2 residues coordinate heme b: histidine 86 and histidine 100. Helical transmembrane passes span 90–110, 116–136, and 186–206; these read ASMMVLMMILHVFRVYLTGGF, LTWVTGVVLAVLTASFGVTGY, and LHTFVLPLLTAVFMLMHFPMI. Residues histidine 187 and histidine 202 each coordinate heme b.

The protein belongs to the cytochrome b family. PetB subfamily. The 4 large subunits of the cytochrome b6-f complex are cytochrome b6, subunit IV (17 kDa polypeptide, PetD), cytochrome f and the Rieske protein, while the 4 small subunits are PetG, PetL, PetM and PetN. The complex functions as a dimer. The cofactor is heme b. Heme c serves as cofactor.

Its subcellular location is the plastid. It is found in the chloroplast thylakoid membrane. Its function is as follows. Component of the cytochrome b6-f complex, which mediates electron transfer between photosystem II (PSII) and photosystem I (PSI), cyclic electron flow around PSI, and state transitions. This chain is Cytochrome b6, found in Daucus carota (Wild carrot).